A 212-amino-acid chain; its full sequence is MKQLFRKWHTLSELKKELTNRNWFPATSGNISIKVSHEPLTFLISASGKDKTKTTPDDFLLVDHQGNPVLETELRPSAETILHTHIYNHTNAGCVLHVHTTDNNVITNLYEKEVMIRNQEIIKALNIWEEGATIHIPIIENYAHIPLLGEAFKKHIQSDCGAVLIRNHGITVWGKDSFDAKKRLEAYEFLFQFHIKLLSIQGGVSSGANSYS.

Residues His97 and His99 each contribute to the Zn(2+) site.

Belongs to the aldolase class II family. MtnB subfamily. As to quaternary structure, homotetramer. It depends on Zn(2+) as a cofactor.

The enzyme catalyses 5-(methylsulfanyl)-D-ribulose 1-phosphate = 5-methylsulfanyl-2,3-dioxopentyl phosphate + H2O. Its pathway is amino-acid biosynthesis; L-methionine biosynthesis via salvage pathway; L-methionine from S-methyl-5-thio-alpha-D-ribose 1-phosphate: step 2/6. Functionally, catalyzes the dehydration of methylthioribulose-1-phosphate (MTRu-1-P) into 2,3-diketo-5-methylthiopentyl-1-phosphate (DK-MTP-1-P). The chain is Methylthioribulose-1-phosphate dehydratase from Bacillus cytotoxicus (strain DSM 22905 / CIP 110041 / 391-98 / NVH 391-98).